Reading from the N-terminus, the 193-residue chain is Putative RNA methyltransferase At5g10620 (193 aa).

Residues leucine 110, glycine 142, and 161–166 (LSSMVL) contribute to the S-adenosyl-L-methionine site.

It belongs to the RNA methyltransferase RlmH family.

This Arabidopsis thaliana (Mouse-ear cress) protein is Putative RNA methyltransferase At5g10620.